A 177-amino-acid chain; its full sequence is Ribosome maturation factor RimP (177 aa).

Belongs to the RimP family.

The protein localises to the cytoplasm. Its function is as follows. Required for maturation of 30S ribosomal subunits. In Mycobacterium marinum (strain ATCC BAA-535 / M), this protein is Ribosome maturation factor RimP.